Consider the following 84-residue polypeptide: Sulfur carrier protein TusA (84 aa).

Cysteine 21 (cysteine persulfide intermediate) is an active-site residue.

Belongs to the sulfur carrier protein TusA family.

Its subcellular location is the cytoplasm. Sulfur carrier protein which probably makes part of a sulfur-relay system. The protein is Sulfur carrier protein TusA of Pseudomonas syringae pv. syringae (strain B728a).